The primary structure comprises 268 residues: Cytochrome b-c1 complex subunit Rieske-5, mitochondrial (268 aa).

Residues 1 to 56 (MLRIAGRKLSSSAAARSSSAFFTRNPFTFTDDSSSPTRSPSPTSLASQFLDQFRGF) constitute a mitochondrion transit peptide. Residues 57–105 (SSNSVSPAHQTGLVSDLPATVAAIKNPSSKIVYDDSNHERYPPGDPSKR) are Mitochondrial matrix-facing. A helical membrane pass occupies residues 106–128 (AFAYFVLTGGRFVYASLVRLLIL). Residues 129 to 268 (KFVLSMSASK…FMEENKLLIG (140 aa)) lie on the Mitochondrial intermembrane side of the membrane. Residues 178 to 266 (INLANSVDLG…YSFMEENKLL (89 aa)) form the Rieske domain. 4 residues coordinate [2Fe-2S] cluster: C211, H213, C230, and H233. C216 and C232 are disulfide-bonded.

The protein belongs to the Rieske iron-sulfur protein family. Component of the ubiquinol-cytochrome c oxidoreductase (cytochrome b-c1 complex, complex III, CIII), a multisubunit enzyme composed of 3 respiratory subunits cytochrome b, cytochrome c1 and Rieske protein, 2 core protein subunits, and several low-molecular weight protein subunits. The complex exists as an obligatory dimer and forms supercomplexes (SCs) in the inner mitochondrial membrane with cytochrome c oxidase (complex IV, CIV). Requires [2Fe-2S] cluster as cofactor. As to expression, high levels are seen in the flowers while a low level expression is seen in the roots, leaves and stems.

The protein localises to the mitochondrion inner membrane. The enzyme catalyses a quinol + 2 Fe(III)-[cytochrome c](out) = a quinone + 2 Fe(II)-[cytochrome c](out) + 2 H(+)(out). In terms of biological role, component of the ubiquinol-cytochrome c oxidoreductase, a multisubunit transmembrane complex that is part of the mitochondrial electron transport chain which drives oxidative phosphorylation. The respiratory chain contains 3 multisubunit complexes succinate dehydrogenase (complex II, CII), ubiquinol-cytochrome c oxidoreductase (cytochrome b-c1 complex, complex III, CIII) and cytochrome c oxidase (complex IV, CIV), that cooperate to transfer electrons derived from NADH and succinate to molecular oxygen, creating an electrochemical gradient over the inner membrane that drives transmembrane transport and the ATP synthase. The cytochrome b-c1 complex catalyzes electron transfer from ubiquinol to cytochrome c, linking this redox reaction to translocation of protons across the mitochondrial inner membrane, with protons being carried across the membrane as hydrogens on the quinol. In the process called Q cycle, 2 protons are consumed from the matrix, 4 protons are released into the intermembrane space and 2 electrons are passed to cytochrome c. The Rieske protein is a catalytic core subunit containing a [2Fe-2S] iron-sulfur cluster. It cycles between 2 conformational states during catalysis to transfer electrons from the quinol bound in the Q(0) site in cytochrome b to cytochrome c1. This Nicotiana tabacum (Common tobacco) protein is Cytochrome b-c1 complex subunit Rieske-5, mitochondrial.